The chain runs to 808 residues: Dynamin-like protein B (808 aa).

One can recognise a Dynamin-type G domain in the interval 43 to 340; sequence FIETPEFVFI…TWRKYLDSVP (298 aa). The G1 motif stretch occupies residues 53-60; it reads GKDGNGKS. 53–60 serves as a coordination point for GTP; it reads GKDGNGKS. Residues 79 to 80 are G2 motif; that stretch reads LR. The G3 motif stretch occupies residues 150–153; sequence EPPS. Residues 150-154 and 239-242 each bind GTP; these read EPPSV and NKFH. The segment at 239 to 242 is G4 motif; the sequence is NKFH. Positions 276–279 are G5 motif; that stretch reads PSTA. Disordered regions lie at residues 536 to 565 and 665 to 695; these read SSFR…SSSI and SLNN…NSNH. 2 stretches are compositionally biased toward low complexity: residues 552–565 and 665–694; these read SSPS…SSSI and SLNN…NNSN.

It belongs to the TRAFAC class dynamin-like GTPase superfamily. Dynamin/Fzo/YdjA family.

The protein localises to the cytoplasm. It carries out the reaction GTP + H2O = GDP + phosphate + H(+). Involved in cytokinesis. May hydrolyze GTP. This chain is Dynamin-like protein B (dlpB), found in Dictyostelium discoideum (Social amoeba).